The sequence spans 320 residues: Olfactory receptor 51E2 (320 aa).

The Extracellular portion of the chain corresponds to Met-1–Phe-24. Asn-5 is a glycosylation site (N-linked (GlcNAc...) asparagine). A helical transmembrane segment spans residues Trp-25–Val-45. Over Phe-46 to Ser-53 the chain is Cytoplasmic. A helical transmembrane segment spans residues Leu-54–Thr-74. Topologically, residues Ser-75–Thr-98 are extracellular. Cys-96 and Cys-178 form a disulfide bridge. A helical transmembrane segment spans residues Gln-99 to Phe-119. At Asp-120–Thr-138 the chain is on the cytoplasmic side. Residues Val-139–Pro-159 form a helical membrane-spanning segment. The Extracellular segment spans residues Leu-160–Val-195. The helical transmembrane segment at Val-196–Ser-216 threads the bilayer. The Cytoplasmic portion of the chain corresponds to Tyr-217–Ala-236. The chain crosses the membrane as a helical span at residues Phe-237–Leu-257. Residues Ser-258–Arg-272 lie on the Extracellular side of the membrane. A helical membrane pass occupies residues Val-273–Ala-293. The Cytoplasmic portion of the chain corresponds to Lys-294–Lys-320.

Belongs to the G-protein coupled receptor 1 family. Highly expressed in the prostate. Also expressed in spleen, liver, olfactory epithelium, retinal pigment epithelium and medulla oblongata. In the retinal pigment epithelium expression is restricted to the pigment cells and choroid (at protein level). Expressed in epidermal melanocytes (at protein level).

It localises to the cell membrane. The protein resides in the early endosome membrane. Functionally, olfactory receptor. Activated by the odorant, beta-ionone, a synthetic terpenoid. The activity of this receptor is probably mediated by G-proteins leading to the elevation of intracellular Ca(2+), cAMP and activation of the protein kinases PKA and MAPK3/MAPK1. Stimulation of OR51E2 by beta-ionone affects melanocyte proliferation, differentiation, and melanogenesis. Activation of OR51E2 by beta-ionone increases proliferation and migration of primary retinal pigment epithelial (RPE) cells. Activated also by the short-chain fatty acids (SCFA) acetate and propionate. In response to SCFA, may positively regulate renin secretion and increase blood pressure. May also be activated by steroid hormones and regulate cell proliferation. Activated by L-lactate in glomus cells. The protein is Olfactory receptor 51E2 of Homo sapiens (Human).